Consider the following 269-residue polypeptide: Diaminopimelate epimerase (269 aa).

Positions 20 and 63 each coordinate substrate. Residue Cys-72 is the Proton donor of the active site. Substrate-binding positions include 73 to 74 (GN), Asn-179, and 197 to 198 (ER). The active-site Proton acceptor is the Cys-207. Substrate is bound at residue 208 to 209 (GT).

Belongs to the diaminopimelate epimerase family. As to quaternary structure, homodimer.

The protein resides in the cytoplasm. The catalysed reaction is (2S,6S)-2,6-diaminopimelate = meso-2,6-diaminopimelate. The protein operates within amino-acid biosynthesis; L-lysine biosynthesis via DAP pathway; DL-2,6-diaminopimelate from LL-2,6-diaminopimelate: step 1/1. Functionally, catalyzes the stereoinversion of LL-2,6-diaminopimelate (L,L-DAP) to meso-diaminopimelate (meso-DAP), a precursor of L-lysine and an essential component of the bacterial peptidoglycan. This is Diaminopimelate epimerase from Chlamydia muridarum (strain MoPn / Nigg).